The following is a 525-amino-acid chain: Asparagine synthetase [glutamine-hydrolyzing] (525 aa).

C2 acts as the For GATase activity in catalysis. The 184-residue stretch at 2-185 (CGILAVLGCS…PGHLYSSKEG (184 aa)) folds into the Glutamine amidotransferase type-2 domain. L-glutamine-binding positions include 50 to 54 (RLAII), 75 to 77 (NGE), and D98. Residues 193 to 517 (PPWFSEVIPS…QIDSPWRSKC (325 aa)) enclose the Asparagine synthetase domain. ATP contacts are provided by residues L231, V267, and 341–342 (SG).

The catalysed reaction is L-aspartate + L-glutamine + ATP + H2O = L-asparagine + L-glutamate + AMP + diphosphate + H(+). The protein operates within amino-acid biosynthesis; L-asparagine biosynthesis; L-asparagine from L-aspartate (L-Gln route): step 1/1. Its function is as follows. Could play a role in remobilization of nitrogen in flowers during senescence. This chain is Asparagine synthetase [glutamine-hydrolyzing] (AND1), found in Sandersonia aurantiaca (Christmas-bells).